The following is a 379-amino-acid chain: MSCPYAGNGNDHDDSAVPLTTEVGKIYGEYLMLDKLLDAQCMLSEEDKRPVHDEHLFIITHQAYELWFKQIIFEFDSIRDMLDAEVIDETKTLEIVKRLNRVVLILKLLVDQVPILETMTPLDFMDFRKYLAPASGFQSLQFRLIENKLGVLTEQRVRYNQKYSDVFSDEEARNSIRNSEKDPSLLELVQRWLERTPGLEETGFNFWAKFQESVDRFLEAQVQSAMEEPVEKAKNYRLMDIEKRREVYRSIFDPAVHDALVRRGDRRFSHRALQGAIMITFYRDEPRFSQPHQLLTLLMDIDSLITKWRYNHVIMVQRMIGSQQLGTGGSSGYQYLRSTLSDRYKVFLDLFNLSTFLIPREAIPPLDETIRKKLINKSV.

Substrate is bound by residues 57-61 (FIITH) and arginine 128. A heme-binding site is contributed by histidine 312. Threonine 327 serves as a coordination point for substrate.

Belongs to the tryptophan 2,3-dioxygenase family. As to quaternary structure, homotetramer. Dimer of dimers. It depends on heme as a cofactor.

The enzyme catalyses L-tryptophan + O2 = N-formyl-L-kynurenine. The protein operates within amino-acid degradation; L-tryptophan degradation via kynurenine pathway; L-kynurenine from L-tryptophan: step 1/2. It functions in the pathway pigment biosynthesis; ommochrome biosynthesis. Heme-dependent dioxygenase that catalyzes the oxidative cleavage of the L-tryptophan (L-Trp) pyrrole ring and converts L-tryptophan to N-formyl-L-kynurenine. Catalyzes the oxidative cleavage of the indole moiety. In Drosophila sechellia (Fruit fly), this protein is Tryptophan 2,3-dioxygenase.